Consider the following 387-residue polypeptide: Galactokinase (387 aa).

Residue 33–36 coordinates substrate; sequence EHID. Residues S67 and 124–130 contribute to the ATP site; that span reads GAGLSSS. The Mg(2+) site is built by S130 and E162. Catalysis depends on D174, which acts as the Proton acceptor. Y224 contacts substrate.

The protein belongs to the GHMP kinase family. GalK subfamily.

It is found in the cytoplasm. The enzyme catalyses alpha-D-galactose + ATP = alpha-D-galactose 1-phosphate + ADP + H(+). It functions in the pathway carbohydrate metabolism; galactose metabolism. In terms of biological role, catalyzes the transfer of the gamma-phosphate of ATP to D-galactose to form alpha-D-galactose-1-phosphate (Gal-1-P). The polypeptide is Galactokinase (Clostridium perfringens (strain 13 / Type A)).